The following is a 152-amino-acid chain: Keratin, high-sulfur matrix protein, B2C (152 aa).

N-acetylalanine is present on Ala2. Repeats lie at residues 27–36 (STCSQTSCCQ), 37–46 (PTSIQTSCCQ), and 47–56 (PTCLQTSGCE).

Its function is as follows. The keratin products of mammalian epidermal derivatives such as wool and hair consist of microfibrils embedded in a rigid matrix of other proteins. The matrix proteins include the high-sulfur and high-tyrosine keratins, having molecular weights of 6-20 kDa, whereas the microfibrils contain the larger, low-sulfur keratins (40-56 kDa). In Ovis aries (Sheep), this protein is Keratin, high-sulfur matrix protein, B2C.